Here is a 554-residue protein sequence, read N- to C-terminus: Formate--tetrahydrofolate ligase (554 aa).

67-74 (TPTGEGKT) contributes to the ATP binding site.

The protein belongs to the formate--tetrahydrofolate ligase family.

It catalyses the reaction (6S)-5,6,7,8-tetrahydrofolate + formate + ATP = (6R)-10-formyltetrahydrofolate + ADP + phosphate. It participates in one-carbon metabolism; tetrahydrofolate interconversion. This is Formate--tetrahydrofolate ligase from Finegoldia magna (strain ATCC 29328 / DSM 20472 / WAL 2508) (Peptostreptococcus magnus).